Consider the following 464-residue polypeptide: Cysteine--tRNA ligase (464 aa).

Zn(2+) is bound at residue Cys-27. The short motif at 29 to 39 is the 'HIGH' region element; that stretch reads PTVYNFFHIGN. Residues Cys-207, His-232, and Glu-236 each coordinate Zn(2+). A 'KMSKS' region motif is present at residues 264 to 268; it reads KMSKS. Lys-267 is an ATP binding site.

It belongs to the class-I aminoacyl-tRNA synthetase family. As to quaternary structure, monomer. It depends on Zn(2+) as a cofactor.

The protein localises to the cytoplasm. The enzyme catalyses tRNA(Cys) + L-cysteine + ATP = L-cysteinyl-tRNA(Cys) + AMP + diphosphate. This chain is Cysteine--tRNA ligase, found in Clostridium acetobutylicum (strain ATCC 824 / DSM 792 / JCM 1419 / IAM 19013 / LMG 5710 / NBRC 13948 / NRRL B-527 / VKM B-1787 / 2291 / W).